A 327-amino-acid polypeptide reads, in one-letter code: Phenylalanine--tRNA ligase alpha subunit (327 aa).

Residue Glu-252 participates in Mg(2+) binding.

The protein belongs to the class-II aminoacyl-tRNA synthetase family. Phe-tRNA synthetase alpha subunit type 1 subfamily. As to quaternary structure, tetramer of two alpha and two beta subunits. Mg(2+) is required as a cofactor.

It localises to the cytoplasm. The catalysed reaction is tRNA(Phe) + L-phenylalanine + ATP = L-phenylalanyl-tRNA(Phe) + AMP + diphosphate + H(+). This is Phenylalanine--tRNA ligase alpha subunit from Shewanella woodyi (strain ATCC 51908 / MS32).